The chain runs to 1295 residues: Phosphoribosylformylglycinamidine synthase (1295 aa).

Residues 305-327 (WPGAATGSGGEIRDEGATGRGAK) are disordered. ATP-binding positions include 307-318 (GAATGSGGEIRD) and Ala-678. Residues Glu-718, Asn-722, and Asp-884 each coordinate Mg(2+). Ser-886 is a binding site for ATP. Residues 1042 to 1295 (VAVLREQGVN…IFRNARKQLG (254 aa)) enclose the Glutamine amidotransferase type-1 domain. The active-site Nucleophile is the Cys-1135. Active-site residues include His-1260 and Glu-1262.

It in the N-terminal section; belongs to the FGAMS family. In terms of assembly, monomer. Post-translationally, both N-terminus methionine truncation and retention have been observed for this protein.

The protein localises to the cytoplasm. The enzyme catalyses N(2)-formyl-N(1)-(5-phospho-beta-D-ribosyl)glycinamide + L-glutamine + ATP + H2O = 2-formamido-N(1)-(5-O-phospho-beta-D-ribosyl)acetamidine + L-glutamate + ADP + phosphate + H(+). It participates in purine metabolism; IMP biosynthesis via de novo pathway; 5-amino-1-(5-phospho-D-ribosyl)imidazole from N(2)-formyl-N(1)-(5-phospho-D-ribosyl)glycinamide: step 1/2. In terms of biological role, phosphoribosylformylglycinamidine synthase involved in the purines biosynthetic pathway. Catalyzes the ATP-dependent conversion of formylglycinamide ribonucleotide (FGAR) and glutamine to yield formylglycinamidine ribonucleotide (FGAM) and glutamate. The protein is Phosphoribosylformylglycinamidine synthase of Escherichia coli (strain K12).